The chain runs to 690 residues: MADYLVIVESPAKAKTIGKYLGKKYTVKASMGHVRDLPKSQMGVDIEDEYSPRYITIRGKGPVLKELKSAAKKVKRVYLAADPDREGEAIAWHLAHSLDIDETSECRVVFNEITKQAIKDAFKSPRPINMDLVDAQQARRVLDRLVGYNISPLLWKKVKKGLSAGRVQSVAVKMIIDREKEIQAFEPEEYWSIQGTFALDGEPFEAKFYGTNGKKVELKSEDDVNNVLAKLKGDQFHVDSVQKKERKRNPVSPFTTSSLQQEAARKLNFRAKKTMMLAQQLYEGIDLGKEGTVGLITYMRTDSTRISDTAKAETKEYIESKFGKEYAQNGTKAVKKDKKSQDAHEAIRPTSVERDPKSLKEYLSRDQLRLYKLIWERLVASQMAPAIMDTMTVDLSNEGVLFRATGSKVKFPGFMKVYIEGNDEGKKEEDRLLPNLQEGQTVTKEEIEPSQHFTQPPPRYTEARLVKTMEELGIGRPSTYAPTLDTIQKRGYVALDERRFVPTELGEIVLELMTEFFPEILDVEFTAKMEDDLDSIEEGKQQWIKIIDDFYKGFEERLKVAEEEMKEVEIKDEPTGEMCEKCGHEMVYKMGRYGKFMACSNFPDCRNTKPIVKEIGVKCPKCEKGEIVERKSKKRRVFYGCNQYPECDFVSWDKPIARSCPKCSSYLVEKRTKKQVQVQCSSCDYKEEAN.

The Toprim domain occupies Asp-3–Ala-121. 2 residues coordinate Mg(2+): Glu-9 and Asp-82. Residues Asn-129–Leu-558 form the Topo IA-type catalytic domain. The segment at Ser-163–Gln-168 is interaction with DNA. Catalysis depends on Tyr-298, which acts as the O-(5'-phospho-DNA)-tyrosine intermediate. A disordered region spans residues Asn-329–Arg-354. A compositionally biased stretch (basic and acidic residues) spans Lys-339 to Arg-354. C4-type zinc fingers lie at residues Cys-579–Cys-605, Cys-619–Cys-647, and Cys-660–Cys-683.

It belongs to the type IA topoisomerase family. As to quaternary structure, monomer. Mg(2+) is required as a cofactor.

It carries out the reaction ATP-independent breakage of single-stranded DNA, followed by passage and rejoining.. In terms of biological role, releases the supercoiling and torsional tension of DNA, which is introduced during the DNA replication and transcription, by transiently cleaving and rejoining one strand of the DNA duplex. Introduces a single-strand break via transesterification at a target site in duplex DNA. The scissile phosphodiester is attacked by the catalytic tyrosine of the enzyme, resulting in the formation of a DNA-(5'-phosphotyrosyl)-enzyme intermediate and the expulsion of a 3'-OH DNA strand. The free DNA strand then undergoes passage around the unbroken strand, thus removing DNA supercoils. Finally, in the religation step, the DNA 3'-OH attacks the covalent intermediate to expel the active-site tyrosine and restore the DNA phosphodiester backbone. The polypeptide is DNA topoisomerase 1 (Halalkalibacterium halodurans (strain ATCC BAA-125 / DSM 18197 / FERM 7344 / JCM 9153 / C-125) (Bacillus halodurans)).